The sequence spans 2559 residues: Stabilin-2 (2559 aa).

Positions 1–28 (MARSKLLLGKLLPLILIFLGLLVQNACS) are cleaved as a signal peptide. The Extracellular segment spans residues 29 to 2464 (PTEAPELTKR…PPTAATAAHS (2436 aa)). Residue asparagine 71 is glycosylated (N-linked (GlcNAc...) asparagine). 5 consecutive EGF-like domains span residues 116 to 156 (DCME…TACE), 164 to 201 (FGPNCSAVCSCVHGVCNSGISGDGTCECLSAYRGPRCD), 203 to 244 (PIPE…QTCK), 245 to 284 (PINPCLKNVCHPHASCSYLGPNRHSCVCQKGYQGDGQVCL), and 330 to 370 (MTDI…LNCY). Disulfide bonds link cysteine 120-cysteine 134, cysteine 128-cysteine 144, and cysteine 146-cysteine 155. N-linked (GlcNAc...) asparagine glycosylation occurs at asparagine 167. 12 cysteine pairs are disulfide-bonded: cysteine 168/cysteine 179, cysteine 172/cysteine 189, cysteine 191/cysteine 200, cysteine 207/cysteine 218, cysteine 212/cysteine 230, cysteine 232/cysteine 243, cysteine 249/cysteine 260, cysteine 254/cysteine 270, cysteine 272/cysteine 283, cysteine 334/cysteine 346, cysteine 340/cysteine 356, and cysteine 358/cysteine 369. The N-linked (GlcNAc...) asparagine glycan is linked to asparagine 345. FAS1 domains are found at residues 379 to 512 (ELNT…DRAM) and 522 to 659 (NPQQ…TGVL). Asparagine 572, asparagine 626, asparagine 673, and asparagine 691 each carry an N-linked (GlcNAc...) asparagine glycan. An EGF-like 6 domain is found at 743 to 783 (DCNPCPGGFMNPCSGNGQCIDGLGGNGTCICEDGFQGSRCQ). 3 cysteine pairs are disulfide-bonded: cysteine 747/cysteine 761, cysteine 755/cysteine 771, and cysteine 773/cysteine 782. An N-linked (GlcNAc...) asparagine glycan is attached at asparagine 768. Asparagine 796 carries an N-linked (GlcNAc...) asparagine glycan. EGF-like domains are found at residues 833 to 873 (QTSA…TLCS), 874 to 917 (KKDP…RDCV), 918 to 960 (EINS…IDCE), and 961 to 1002 (PIIS…VLCY). 12 disulfides stabilise this stretch: cysteine 837-cysteine 850, cysteine 844-cysteine 859, cysteine 861-cysteine 872, cysteine 878-cysteine 893, cysteine 887-cysteine 903, cysteine 905-cysteine 916, cysteine 922-cysteine 936, cysteine 930-cysteine 946, cysteine 948-cysteine 959, cysteine 965-cysteine 978, cysteine 972-cysteine 988, and cysteine 990-cysteine 1001. Asparagine 854 is a glycosylation site (N-linked (GlcNAc...) asparagine). N-linked (GlcNAc...) asparagine glycosylation is present at asparagine 933. 2 consecutive FAS1 domains span residues 1002–1135 (YGNV…NKVL) and 1145–1273 (LPSL…EKVL). N-linked (GlcNAc...) asparagine glycosylation is found at asparagine 1024, asparagine 1036, asparagine 1108, asparagine 1255, and asparagine 1283. Residues 1350-1415 (PQCQACPGKG…CSCVHGRCNQ (66 aa)) form the Laminin EGF-like 1 domain. Disulfide bonds link cysteine 1355–cysteine 1369, cysteine 1363–cysteine 1379, cysteine 1381–cysteine 1390, cysteine 1402–cysteine 1413, cysteine 1406–cysteine 1423, cysteine 1425–cysteine 1434, cysteine 1443–cysteine 1453, cysteine 1447–cysteine 1463, cysteine 1465–cysteine 1476, cysteine 1482–cysteine 1495, cysteine 1489–cysteine 1505, cysteine 1507–cysteine 1518, cysteine 1524–cysteine 1537, cysteine 1531–cysteine 1547, cysteine 1549–cysteine 1560, cysteine 1566–cysteine 1579, cysteine 1573–cysteine 1589, and cysteine 1591–cysteine 1602. N-linked (GlcNAc...) asparagine glycans are attached at residues asparagine 1374 and asparagine 1386. EGF-like domains follow at residues 1439–1477 (TTDNCNGTCHTSANCLLDPDGKASCKCAAGFQGNGTVCT), 1478–1519 (AINA…IVCL), 1520–1561 (EINP…KVCT), and 1562–1603 (LINV…IVCR). The N-linked (GlcNAc...) asparagine glycan is linked to asparagine 1444. Residue asparagine 1472 is glycosylated (N-linked (GlcNAc...) asparagine). Residue asparagine 1580 is glycosylated (N-linked (GlcNAc...) asparagine). FAS1 domains are found at residues 1603 to 1731 (RGSI…DTLL) and 1747 to 1888 (VLLN…DCLL). Asparagine 1750 carries N-linked (GlcNAc...) asparagine glycosylation. In terms of domain architecture, Laminin EGF-like 2 spans 1965 to 2030 (PDCQACPGGP…GCSEHGQCDE (66 aa)). 17 disulfide bridges follow: cysteine 1970/cysteine 1984, cysteine 1978/cysteine 1994, cysteine 1996/cysteine 2005, cysteine 2017/cysteine 2028, cysteine 2022/cysteine 2038, cysteine 2040/cysteine 2049, cysteine 2059/cysteine 2069, cysteine 2063/cysteine 2075, cysteine 2077/cysteine 2088, cysteine 2094/cysteine 2107, cysteine 2101/cysteine 2116, cysteine 2118/cysteine 2129, cysteine 2135/cysteine 2149, cysteine 2143/cysteine 2159, cysteine 2161/cysteine 2172, cysteine 2228/cysteine 2296, and cysteine 2252/cysteine 2273. Asparagine 2001 carries N-linked (GlcNAc...) asparagine glycosylation. 3 consecutive EGF-like domains span residues 2055–2089 (VIPVCIPACSMHATCMENNTCVCNLNYEGDGITCT), 2090–2130 (VVDF…HSCT), and 2131–2173 (EIDP…RDCE). Residue asparagine 2072 is glycosylated (N-linked (GlcNAc...) asparagine). In terms of domain architecture, Link spans 2206–2298 (GVFHLRSPLG…SEMWDVFCYR (93 aa)). Asparagine 2287, asparagine 2303, asparagine 2375, asparagine 2391, and asparagine 2400 each carry an N-linked (GlcNAc...) asparagine glycan. One can recognise an FAS1 7 domain in the interval 2318–2452 (NGNLLQVLMS…GVLHIISEPL (135 aa)). The helical transmembrane segment at 2465–2485 (GLGTGIFCAVVLVTGAIALAA) threads the bilayer. The Cytoplasmic segment spans residues 2486–2559 (YSYFRLNQRT…NSDPLGALRS (74 aa)). Position 2503 is a phosphoserine (serine 2503). The interaction with TMSB4X stretch occupies residues 2510-2520 (LAFGKQQPESI). A disordered region spans residues 2514 to 2559 (KQQPESITNPLYETSTPAAPEPSCDPFTDSGERELENSDPLGALRS). Polar residues predominate over residues 2516 to 2530 (QPESITNPLYETSTP).

In terms of assembly, interacts with heparin, alpha-M/beta-2 integrin (ITGAM and ITGB2), and thymosin beta 4 (TMSB4X). Interacts with GULP1. Associates with clathrin and adapter protein AP-2; in liver sinusoidal endothelial cells (LSECs). Post-translationally, glycosylated. In terms of processing, proteolytically processed to yield a smaller protein. As to expression, expressed in endothelial sinuses of liver, lymph nodes, bone marrow, spleen and in specialised structures of eye, heart, brain and kidney. Expression is detected in corneal and lens epithelium, in mesenchymal cells of the heart valves, in the ependymal cells lining the ventricles in the brain, and in the prismatic epithelial cells covering the renal papillae.

It is found in the cytoplasm. The protein localises to the cell membrane. Phosphatidylserine receptor that enhances the engulfment of apoptotic cells. Hyaluronan receptor that binds to and mediates endocytosis of hyaluronic acid (HA). Also acts, in different species, as a primary systemic scavenger receptor for heparin (Hep), chondroitin sulfate (CS), dermatan sulfate (DS), nonglycosaminoglycan (GAG), acetylated low-density lipoprotein (AcLDL), pro-collagen propeptides and advanced glycation end products (AGE). May serve to maintain tissue integrity by supporting extracellular matrix turnover or it may contribute to maintaining fluidity of bodily liquids by resorption of hyaluronan. Counter receptor which plays an important role in lymphocyte recruitment in the hepatic vasculature. Binds to both Gram-positive and Gram-negative bacteria and may play a role in defense against bacterial infection. The proteolytically processed short form also functions as an endocytosis receptor for heparin internalization as well as HA and CS. The chain is Stabilin-2 from Mus musculus (Mouse).